Consider the following 379-residue polypeptide: MKENELKNEKSVDVLSFKQLESQKIVLPQDLFRSSFTWFCYEIYKSLAFRIWMLLWLPLSVWWKLSNNCIYPLIVSLLVLFLGPIFVLVICGLSRKRSLSKQLIQFCKEITENTPSSDPHDWEVVAANLNSYLYENNVWNTKYFFFNAMVCQEAFRTTLLEPFSLKKDKAAKVKSFKDSVPYIEEALGVYFTEVEKQWKLFNTEKSWSPVGLEDAKLPKEAYRFKLTWFLKRISNIFMLIPFLNFLCCIYVSRGMCLLLRTLYLGWILFMLVQGFQNIRVLIMSMEHKMQFLSTIINEQESGANGWDEIARKMNRYLFEKKAWKNEEFFFDGIDCEWFFNHFFYRVLSAKKSMWPLPLNVELWPYIKEAQLSRSEVLLV.

Topologically, residues 1–72 (MKENELKNEK…WKLSNNCIYP (72 aa)) are cytoplasmic. A helical membrane pass occupies residues 73–93 (LIVSLLVLFLGPIFVLVICGL). Over 94-254 (SRKRSLSKQL…FLCCIYVSRG (161 aa)) the chain is Extracellular. Residues 255 to 275 (MCLLLRTLYLGWILFMLVQGF) traverse the membrane as a helical segment. Over 276–379 (QNIRVLIMSM…QLSRSEVLLV (104 aa)) the chain is Cytoplasmic.

The protein belongs to the DUP/COS family.

It is found in the membrane. The protein is Protein COS2 (COS2) of Saccharomyces cerevisiae (strain ATCC 204508 / S288c) (Baker's yeast).